A 107-amino-acid polypeptide reads, in one-letter code: UPF0145 protein ETA_21660 (107 aa).

Belongs to the UPF0145 family.

This is UPF0145 protein ETA_21660 from Erwinia tasmaniensis (strain DSM 17950 / CFBP 7177 / CIP 109463 / NCPPB 4357 / Et1/99).